A 221-amino-acid chain; its full sequence is Uracil-DNA glycosylase 1 (221 aa).

Asp61 functions as the Proton acceptor in the catalytic mechanism.

The protein belongs to the uracil-DNA glycosylase (UDG) superfamily. UNG family.

It is found in the cytoplasm. The catalysed reaction is Hydrolyzes single-stranded DNA or mismatched double-stranded DNA and polynucleotides, releasing free uracil.. Its function is as follows. Excises uracil residues from the DNA which can arise as a result of misincorporation of dUMP residues by DNA polymerase or due to deamination of cytosine. The sequence is that of Uracil-DNA glycosylase 1 from Listeria innocua serovar 6a (strain ATCC BAA-680 / CLIP 11262).